Here is a 1406-residue protein sequence, read N- to C-terminus: DNA-directed RNA polymerase subunit beta' (1406 aa).

Zn(2+) is bound by residues Cys-70, Cys-72, Cys-85, and Cys-88. Mg(2+)-binding residues include Asp-460, Asp-462, and Asp-464. Zn(2+) is bound by residues Cys-814, Cys-889, Cys-896, and Cys-899.

It belongs to the RNA polymerase beta' chain family. As to quaternary structure, the RNAP catalytic core consists of 2 alpha, 1 beta, 1 beta' and 1 omega subunit. When a sigma factor is associated with the core the holoenzyme is formed, which can initiate transcription. Mg(2+) serves as cofactor. Zn(2+) is required as a cofactor.

The catalysed reaction is RNA(n) + a ribonucleoside 5'-triphosphate = RNA(n+1) + diphosphate. Its function is as follows. DNA-dependent RNA polymerase catalyzes the transcription of DNA into RNA using the four ribonucleoside triphosphates as substrates. This Stenotrophomonas maltophilia (strain K279a) protein is DNA-directed RNA polymerase subunit beta'.